Reading from the N-terminus, the 495-residue chain is ATP synthase subunit beta, chloroplastic (495 aa).

172–179 (GGAGVGKT) lines the ATP pocket.

Belongs to the ATPase alpha/beta chains family. F-type ATPases have 2 components, CF(1) - the catalytic core - and CF(0) - the membrane proton channel. CF(1) has five subunits: alpha(3), beta(3), gamma(1), delta(1), epsilon(1). CF(0) has four main subunits: a(1), b(1), b'(1) and c(9-12).

It is found in the plastid. The protein localises to the chloroplast thylakoid membrane. It carries out the reaction ATP + H2O + 4 H(+)(in) = ADP + phosphate + 5 H(+)(out). Its function is as follows. Produces ATP from ADP in the presence of a proton gradient across the membrane. The catalytic sites are hosted primarily by the beta subunits. In Beaucarnea recurvata (Elephant-foot tree), this protein is ATP synthase subunit beta, chloroplastic.